The chain runs to 124 residues: Holo-[acyl-carrier-protein] synthase (124 aa).

Residues Asp7 and Glu55 each coordinate Mg(2+).

It belongs to the P-Pant transferase superfamily. AcpS family. Mg(2+) is required as a cofactor.

The protein localises to the cytoplasm. The enzyme catalyses apo-[ACP] + CoA = holo-[ACP] + adenosine 3',5'-bisphosphate + H(+). Transfers the 4'-phosphopantetheine moiety from coenzyme A to a Ser of acyl-carrier-protein. This Borrelia garinii subsp. bavariensis (strain ATCC BAA-2496 / DSM 23469 / PBi) (Borreliella bavariensis) protein is Holo-[acyl-carrier-protein] synthase.